Reading from the N-terminus, the 421-residue chain is Enolase (421 aa).

Q162 is a (2R)-2-phosphoglycerate binding site. E204 functions as the Proton donor in the catalytic mechanism. 3 residues coordinate Mg(2+): D241, E284, and D311. (2R)-2-phosphoglycerate contacts are provided by K336, R365, S366, and K387. K336 serves as the catalytic Proton acceptor.

The protein belongs to the enolase family. Requires Mg(2+) as cofactor.

It is found in the cytoplasm. The protein localises to the secreted. Its subcellular location is the cell surface. The catalysed reaction is (2R)-2-phosphoglycerate = phosphoenolpyruvate + H2O. It participates in carbohydrate degradation; glycolysis; pyruvate from D-glyceraldehyde 3-phosphate: step 4/5. In terms of biological role, catalyzes the reversible conversion of 2-phosphoglycerate (2-PG) into phosphoenolpyruvate (PEP). It is essential for the degradation of carbohydrates via glycolysis. This chain is Enolase, found in Nautilia profundicola (strain ATCC BAA-1463 / DSM 18972 / AmH).